A 166-amino-acid chain; its full sequence is NADPH-dependent 7-cyano-7-deazaguanine reductase (166 aa).

Cys-57 acts as the Thioimide intermediate in catalysis. Asp-64 acts as the Proton donor in catalysis. Residues 79–81 and 98–99 each bind substrate; these read VES and HE.

This sequence belongs to the GTP cyclohydrolase I family. QueF type 1 subfamily.

Its subcellular location is the cytoplasm. It catalyses the reaction 7-aminomethyl-7-carbaguanine + 2 NADP(+) = 7-cyano-7-deazaguanine + 2 NADPH + 3 H(+). It functions in the pathway tRNA modification; tRNA-queuosine biosynthesis. Functionally, catalyzes the NADPH-dependent reduction of 7-cyano-7-deazaguanine (preQ0) to 7-aminomethyl-7-deazaguanine (preQ1). The sequence is that of NADPH-dependent 7-cyano-7-deazaguanine reductase from Staphylococcus haemolyticus (strain JCSC1435).